The chain runs to 252 residues: Accessory gland protein Acp32CD (252 aa).

Residues 1–19 form the signal peptide; it reads MWRMRMRLLTGYLVLLALG. The disordered stretch occupies residues 42–252; sequence PDGEGGTGVD…GAKEDDYEEM (211 aa). A compositionally biased stretch (gly residues) spans 44-69; it reads GEGGTGVDGGGGGAGGGAAGPGGGTG. Basic and acidic residues-rich tracts occupy residues 104–122, 142–153, 159–171, and 209–225; these read AIGKKESGGGSDGKSDSKD, SDSKDAKDRQDK, QEGKRTDHSHHSS, and NGARESSQENQDAKEVA.

Seminal fluid.

Its subcellular location is the secreted. Its function is as follows. Responsible for physiological and behavioral changes in mated female flies. The chain is Accessory gland protein Acp32CD (Acp32CD) from Drosophila melanogaster (Fruit fly).